Reading from the N-terminus, the 318-residue chain is NADH-ubiquinone oxidoreductase chain 1 (318 aa).

8 helical membrane-spanning segments follow: residues 2-22 (FMIN…FLTL), 70-90 (MFII…IPLP), 100-120 (LGIL…LWSG), 147-167 (AIIL…TLII), 171-191 (YLWL…STLA), 217-237 (AGPF…MNIF), 253-273 (ELYS…FLWI), and 294-314 (LPLT…LSSI).

The protein belongs to the complex I subunit 1 family. Core subunit of respiratory chain NADH dehydrogenase (Complex I) which is composed of 45 different subunits.

It is found in the mitochondrion inner membrane. It catalyses the reaction a ubiquinone + NADH + 5 H(+)(in) = a ubiquinol + NAD(+) + 4 H(+)(out). Core subunit of the mitochondrial membrane respiratory chain NADH dehydrogenase (Complex I) which catalyzes electron transfer from NADH through the respiratory chain, using ubiquinone as an electron acceptor. Essential for the catalytic activity and assembly of complex I. This chain is NADH-ubiquinone oxidoreductase chain 1 (MT-ND1), found in Equus caballus (Horse).